A 213-amino-acid polypeptide reads, in one-letter code: dITP/XTP pyrophosphatase (213 aa).

17–22 contributes to the substrate binding site; the sequence is SNNAGK. Residues E49 and D78 each contribute to the Mg(2+) site. The active-site Proton acceptor is D78. Substrate-binding positions include S79, 164–167, K187, and 192–193; these read FGYD and HR.

Belongs to the HAM1 NTPase family. As to quaternary structure, homodimer. It depends on Mg(2+) as a cofactor.

It carries out the reaction XTP + H2O = XMP + diphosphate + H(+). The catalysed reaction is dITP + H2O = dIMP + diphosphate + H(+). It catalyses the reaction ITP + H2O = IMP + diphosphate + H(+). In terms of biological role, pyrophosphatase that catalyzes the hydrolysis of nucleoside triphosphates to their monophosphate derivatives, with a high preference for the non-canonical purine nucleotides XTP (xanthosine triphosphate), dITP (deoxyinosine triphosphate) and ITP. Seems to function as a house-cleaning enzyme that removes non-canonical purine nucleotides from the nucleotide pool, thus preventing their incorporation into DNA/RNA and avoiding chromosomal lesions. The polypeptide is dITP/XTP pyrophosphatase (Bordetella bronchiseptica (strain ATCC BAA-588 / NCTC 13252 / RB50) (Alcaligenes bronchisepticus)).